We begin with the raw amino-acid sequence, 582 residues long: Aspartate--tRNA ligase (582 aa).

Glu-174 contributes to the L-aspartate binding site. Residues Gln-198–Lys-201 form an aspartate region. Arg-220 is a binding site for L-aspartate. ATP-binding positions include Arg-220–Glu-222 and Gln-229. L-aspartate is bound at residue His-443. Glu-477 provides a ligand contact to ATP. Arg-484 is a binding site for L-aspartate. Residue Gly-529 to Arg-532 participates in ATP binding.

Belongs to the class-II aminoacyl-tRNA synthetase family. Type 1 subfamily. Homodimer.

The protein localises to the cytoplasm. It carries out the reaction tRNA(Asp) + L-aspartate + ATP = L-aspartyl-tRNA(Asp) + AMP + diphosphate. Its function is as follows. Catalyzes the attachment of L-aspartate to tRNA(Asp) in a two-step reaction: L-aspartate is first activated by ATP to form Asp-AMP and then transferred to the acceptor end of tRNA(Asp). The sequence is that of Aspartate--tRNA ligase from Streptococcus equi subsp. zooepidemicus (strain MGCS10565).